Reading from the N-terminus, the 363-residue chain is Biotin synthase (363 aa).

Residues 38–266 (NTVQVSTLLS…ETQVRLSAGR (229 aa)) form the Radical SAM core domain. [4Fe-4S] cluster is bound by residues cysteine 53, cysteine 57, and cysteine 60. [2Fe-2S] cluster-binding residues include cysteine 97, cysteine 129, cysteine 189, and arginine 261. Positions 315 to 363 (KAFEKKSQPESVAAEKSKYQSQGEKPRWSRPEHKIDRNLEAQQNAKTKA) are disordered. Basic and acidic residues predominate over residues 316-353 (AFEKKSQPESVAAEKSKYQSQGEKPRWSRPEHKIDRNL). Polar residues predominate over residues 354-363 (EAQQNAKTKA).

This sequence belongs to the radical SAM superfamily. Biotin synthase family. As to quaternary structure, homodimer. Requires [4Fe-4S] cluster as cofactor. It depends on [2Fe-2S] cluster as a cofactor.

The catalysed reaction is (4R,5S)-dethiobiotin + (sulfur carrier)-SH + 2 reduced [2Fe-2S]-[ferredoxin] + 2 S-adenosyl-L-methionine = (sulfur carrier)-H + biotin + 2 5'-deoxyadenosine + 2 L-methionine + 2 oxidized [2Fe-2S]-[ferredoxin]. The protein operates within cofactor biosynthesis; biotin biosynthesis; biotin from 7,8-diaminononanoate: step 2/2. Functionally, catalyzes the conversion of dethiobiotin (DTB) to biotin by the insertion of a sulfur atom into dethiobiotin via a radical-based mechanism. The protein is Biotin synthase of Christiangramia forsetii (strain DSM 17595 / CGMCC 1.15422 / KT0803) (Gramella forsetii).